A 147-amino-acid polypeptide reads, in one-letter code: Basic phospholipase A2 beta-bungarotoxin A2 chain (147 aa).

The signal sequence occupies residues 1 to 19 (MYPAHLLVLSAVCVSLLGA). A propeptide spanning residues 20–27 (ANIPPYPL) is cleaved from the precursor. 6 disulfides stabilise this stretch: cysteine 54–cysteine 146, cysteine 56–cysteine 72, cysteine 71–cysteine 127, cysteine 78–cysteine 120, cysteine 88–cysteine 113, and cysteine 106–cysteine 118. Positions 55, 57, and 59 each coordinate Ca(2+). The active site involves histidine 75. Aspartate 76 serves as a coordination point for Ca(2+). The active site involves aspartate 121.

Belongs to the phospholipase A2 family. Group I subfamily. D49 sub-subfamily. In terms of assembly, heterodimer; disulfide-linked. The A chains have phospholipase A2 activity and the B chains show homology with the basic protease inhibitors. Ca(2+) serves as cofactor. Expressed by the venom gland.

The protein localises to the secreted. The catalysed reaction is a 1,2-diacyl-sn-glycero-3-phosphocholine + H2O = a 1-acyl-sn-glycero-3-phosphocholine + a fatty acid + H(+). Snake venom phospholipase A2 (PLA2) that inhibits neuromuscular transmission by blocking acetylcholine release from the nerve termini. PLA2 catalyzes the calcium-dependent hydrolysis of the 2-acyl groups in 3-sn-phosphoglycerides. The sequence is that of Basic phospholipase A2 beta-bungarotoxin A2 chain from Bungarus caeruleus (Indian krait).